A 612-amino-acid chain; its full sequence is Dihydroxy-acid dehydratase (612 aa).

Asp81 is a Mg(2+) binding site. [2Fe-2S] cluster is bound at residue Cys122. Positions 123 and 124 each coordinate Mg(2+). Lys124 carries the post-translational modification N6-carboxylysine. Cys195 contributes to the [2Fe-2S] cluster binding site. Glu491 provides a ligand contact to Mg(2+). The Proton acceptor role is filled by Ser517.

Belongs to the IlvD/Edd family. As to quaternary structure, homodimer. Requires [2Fe-2S] cluster as cofactor. It depends on Mg(2+) as a cofactor.

The catalysed reaction is (2R)-2,3-dihydroxy-3-methylbutanoate = 3-methyl-2-oxobutanoate + H2O. It catalyses the reaction (2R,3R)-2,3-dihydroxy-3-methylpentanoate = (S)-3-methyl-2-oxopentanoate + H2O. It participates in amino-acid biosynthesis; L-isoleucine biosynthesis; L-isoleucine from 2-oxobutanoate: step 3/4. The protein operates within amino-acid biosynthesis; L-valine biosynthesis; L-valine from pyruvate: step 3/4. Its function is as follows. Functions in the biosynthesis of branched-chain amino acids. Catalyzes the dehydration of (2R,3R)-2,3-dihydroxy-3-methylpentanoate (2,3-dihydroxy-3-methylvalerate) into 2-oxo-3-methylpentanoate (2-oxo-3-methylvalerate) and of (2R)-2,3-dihydroxy-3-methylbutanoate (2,3-dihydroxyisovalerate) into 2-oxo-3-methylbutanoate (2-oxoisovalerate), the penultimate precursor to L-isoleucine and L-valine, respectively. This Rhizobium rhizogenes (strain K84 / ATCC BAA-868) (Agrobacterium radiobacter) protein is Dihydroxy-acid dehydratase.